Consider the following 316-residue polypeptide: Mycothiol acetyltransferase (316 aa).

N-acetyltransferase domains follow at residues 16–153 (REVR…VPAV) and 156–316 (VRIR…PAAN). Glu-36 contributes to the 1D-myo-inositol 2-(L-cysteinylamino)-2-deoxy-alpha-D-glucopyranoside binding site. Acetyl-CoA-binding positions include 83–85 (LVV) and 91–96 (RRGIGS). 1D-myo-inositol 2-(L-cysteinylamino)-2-deoxy-alpha-D-glucopyranoside is bound by residues Glu-183, Lys-228, and Glu-238. Residues 242-244 (VGV) and 249-255 (QGRGLGQ) each bind acetyl-CoA. Tyr-283 lines the 1D-myo-inositol 2-(L-cysteinylamino)-2-deoxy-alpha-D-glucopyranoside pocket. 288–293 (NVAAVR) contacts acetyl-CoA.

This sequence belongs to the acetyltransferase family. MshD subfamily. As to quaternary structure, monomer.

It carries out the reaction 1D-myo-inositol 2-(L-cysteinylamino)-2-deoxy-alpha-D-glucopyranoside + acetyl-CoA = mycothiol + CoA + H(+). Functionally, catalyzes the transfer of acetyl from acetyl-CoA to desacetylmycothiol (Cys-GlcN-Ins) to form mycothiol. This is Mycothiol acetyltransferase from Mycobacterium avium (strain 104).